The following is a 131-amino-acid chain: TACTTGPQTISFPAGLIVSLNASVQSSRNESVEVKDSNGNTVSRGSGSSSSGGTFTVINMEPPTFISDGNDYTVELSPQATPGILQTESSRVDNGRLIWQNYAFGANDGGCIVGDRDFNDVFVLITGLVRG.

Cysteine 3 and cysteine 111 are joined by a disulfide. Positions 28 to 60 (RNESVEVKDSNGNTVSRGSGSSSSGGTFTVINM) are disordered. The span at 37 to 54 (SNGNTVSRGSGSSSSGGT) shows a compositional bias: low complexity. Residues 117–131 (DFNDVFVLITGLVRG) carry the Pseudodomain-swapping motif motif.

Binds to fucose and mannose in a calcium-dependent manner (in vitro). Acts as an agonist for human thrombopoietin receptor MPL (in vitro). Binding of sugar-moieties may promote the interaction with human MPL on the cell surface (in vitro). Catalyzes MPL dimerization and activation, and modulates internalization of the receptor (in vitro). Exhibits proliferation activity in murine recombinant Ba/F3 cells expressing human MPL (Ba/F3-huMPL) (in vitro). Induces phosphorylation of STAT5 in recombinant Ba/F3-huMPL cells, possibly by stimulating MPL on the cell surface to transduce signals via Jak/STAT signaling pathway (in vitro). Does not aggregate rabbit erythrocytes, indicating absent lectin-like agglutination activity (in vitro). The sequence is that of Thrombocorticin from Corticium sp. (Marine sponge).